The chain runs to 152 residues: 2-C-methyl-D-erythritol 2,4-cyclodiphosphate synthase (152 aa).

Residues D8 and H10 each contribute to the a divalent metal cation site. 4-CDP-2-C-methyl-D-erythritol 2-phosphate-binding positions include 8–10 (DSH) and 34–35 (HS). Position 42 (H42) interacts with a divalent metal cation. Residues 56-58 (DIG) and 61-65 (FPDTD) contribute to the 4-CDP-2-C-methyl-D-erythritol 2-phosphate site.

The protein belongs to the IspF family. As to quaternary structure, homotrimer. It depends on a divalent metal cation as a cofactor.

It carries out the reaction 4-CDP-2-C-methyl-D-erythritol 2-phosphate = 2-C-methyl-D-erythritol 2,4-cyclic diphosphate + CMP. It participates in isoprenoid biosynthesis; isopentenyl diphosphate biosynthesis via DXP pathway; isopentenyl diphosphate from 1-deoxy-D-xylulose 5-phosphate: step 4/6. Functionally, involved in the biosynthesis of isopentenyl diphosphate (IPP) and dimethylallyl diphosphate (DMAPP), two major building blocks of isoprenoid compounds. Catalyzes the conversion of 4-diphosphocytidyl-2-C-methyl-D-erythritol 2-phosphate (CDP-ME2P) to 2-C-methyl-D-erythritol 2,4-cyclodiphosphate (ME-CPP) with a corresponding release of cytidine 5-monophosphate (CMP). The chain is 2-C-methyl-D-erythritol 2,4-cyclodiphosphate synthase from Thermus thermophilus (strain ATCC BAA-163 / DSM 7039 / HB27).